The primary structure comprises 383 residues: N-acetyldiaminopimelate deacetylase (383 aa).

Residue D72 is part of the active site. Residue E131 is the Proton acceptor of the active site.

Belongs to the peptidase M20A family. N-acetyldiaminopimelate deacetylase subfamily.

It catalyses the reaction N-acetyl-(2S,6S)-2,6-diaminopimelate + H2O = (2S,6S)-2,6-diaminopimelate + acetate. It participates in amino-acid biosynthesis; L-lysine biosynthesis via DAP pathway; LL-2,6-diaminopimelate from (S)-tetrahydrodipicolinate (acetylase route): step 3/3. Its function is as follows. Catalyzes the conversion of N-acetyl-diaminopimelate to diaminopimelate and acetate. The protein is N-acetyldiaminopimelate deacetylase of Lacticaseibacillus paracasei (strain ATCC 334 / BCRC 17002 / CCUG 31169 / CIP 107868 / KCTC 3260 / NRRL B-441) (Lactobacillus paracasei).